The following is a 388-amino-acid chain: Succinate--CoA ligase [ADP-forming] subunit beta (388 aa).

The ATP-grasp domain occupies 9–244 (KQLFREYGLP…TTQDDEREMH (236 aa)). Residues Lys-46, 53-55 (GRG), Glu-99, Ser-102, and Glu-107 each bind ATP. Mg(2+)-binding residues include Asn-199 and Asp-213. Residues Asn-264 and 321-323 (GIV) each bind substrate.

This sequence belongs to the succinate/malate CoA ligase beta subunit family. In terms of assembly, heterotetramer of two alpha and two beta subunits. Mg(2+) is required as a cofactor.

It carries out the reaction succinate + ATP + CoA = succinyl-CoA + ADP + phosphate. The catalysed reaction is GTP + succinate + CoA = succinyl-CoA + GDP + phosphate. It functions in the pathway carbohydrate metabolism; tricarboxylic acid cycle; succinate from succinyl-CoA (ligase route): step 1/1. In terms of biological role, succinyl-CoA synthetase functions in the citric acid cycle (TCA), coupling the hydrolysis of succinyl-CoA to the synthesis of either ATP or GTP and thus represents the only step of substrate-level phosphorylation in the TCA. The beta subunit provides nucleotide specificity of the enzyme and binds the substrate succinate, while the binding sites for coenzyme A and phosphate are found in the alpha subunit. In Psychromonas ingrahamii (strain DSM 17664 / CCUG 51855 / 37), this protein is Succinate--CoA ligase [ADP-forming] subunit beta.